We begin with the raw amino-acid sequence, 631 residues long: Glutamyl-tRNA(Gln) amidotransferase subunit E (631 aa).

This sequence belongs to the GatB/GatE family. GatE subfamily. Heterodimer of GatD and GatE.

It catalyses the reaction L-glutamyl-tRNA(Gln) + L-glutamine + ATP + H2O = L-glutaminyl-tRNA(Gln) + L-glutamate + ADP + phosphate + H(+). Allows the formation of correctly charged Gln-tRNA(Gln) through the transamidation of misacylated Glu-tRNA(Gln) in organisms which lack glutaminyl-tRNA synthetase. The reaction takes place in the presence of glutamine and ATP through an activated gamma-phospho-Glu-tRNA(Gln). The GatDE system is specific for glutamate and does not act on aspartate. This Methanococcus maripaludis (strain DSM 14266 / JCM 13030 / NBRC 101832 / S2 / LL) protein is Glutamyl-tRNA(Gln) amidotransferase subunit E.